A 172-amino-acid chain; its full sequence is ATP synthase subunit b, chloroplastic (172 aa).

The chain crosses the membrane as a helical span at residues 15–37 (ILATNLINLSAVLGVLIFFGKGV).

This sequence belongs to the ATPase B chain family. In terms of assembly, F-type ATPases have 2 components, F(1) - the catalytic core - and F(0) - the membrane proton channel. F(1) has five subunits: alpha(3), beta(3), gamma(1), delta(1), epsilon(1). F(0) has four main subunits: a(1), b(1), b'(1) and c(10-14). The alpha and beta chains form an alternating ring which encloses part of the gamma chain. F(1) is attached to F(0) by a central stalk formed by the gamma and epsilon chains, while a peripheral stalk is formed by the delta, b and b' chains.

The protein resides in the plastid. Its subcellular location is the chloroplast thylakoid membrane. F(1)F(0) ATP synthase produces ATP from ADP in the presence of a proton or sodium gradient. F-type ATPases consist of two structural domains, F(1) containing the extramembraneous catalytic core and F(0) containing the membrane proton channel, linked together by a central stalk and a peripheral stalk. During catalysis, ATP synthesis in the catalytic domain of F(1) is coupled via a rotary mechanism of the central stalk subunits to proton translocation. Its function is as follows. Component of the F(0) channel, it forms part of the peripheral stalk, linking F(1) to F(0). This Pisum sativum (Garden pea) protein is ATP synthase subunit b, chloroplastic.